Here is a 174-residue protein sequence, read N- to C-terminus: Phytochrome-interacting ankyrin-repeat protein 2 (174 aa).

Residues 1 to 13 (MLQEPSAAFSLRR) are compositionally biased toward low complexity. Residues 1–29 (MLQEPSAAFSLRRNSFRRRSPRSNVDDRG) are disordered. A Phosphoserine modification is found at Ser15. ANK repeat units follow at residues 28-57 (RGWN…DVNA), 65-94 (KGVS…NIDA), and 100-129 (CGWT…FLAD).

As to quaternary structure, interacts with phytochrome A (PHYA), both in Pr and Pfr forms. Binds to PIF3, a repressor of photomorphogenesis in response to phytochrome-mediated light signaling; this interaction may trigger the repression of PHYA-mediated PIF3 phosphorylation. Interacts with SIGE/SIG5 in mitochondrion. Interacts with RPS9M (via C terminus). Post-translationally, phosphorylated by PHYA. In terms of tissue distribution, mostly expressed in flowers, cotyledons, leaves and siliques, and, to a lower extent, in roots and stems. Also detected at low levels in seedlings grown in continuous dark or light conditions. Expressed in male and female gametophytes.

Its subcellular location is the cytoplasm. The protein resides in the nucleus. It is found in the mitochondrion. In terms of biological role, promotes anthocyanin accumulation through interaction with PHYA, especially in response to far-red light, high light and sucrose treatment, probably by triggering A3G2XYLT/UF3GT expression. Required for gametophytes development as well as male-female gamete recognition during fertilization, possibly by regulating mitochondrial gene expression. Represses PHYA-mediated PIF3 phosphorylation. The protein is Phytochrome-interacting ankyrin-repeat protein 2 of Arabidopsis thaliana (Mouse-ear cress).